Here is a 445-residue protein sequence, read N- to C-terminus: Phosphoglucosamine mutase (445 aa).

The Phosphoserine intermediate role is filled by serine 101. Residues serine 101, aspartate 240, aspartate 242, and aspartate 244 each contribute to the Mg(2+) site. A Phosphoserine modification is found at serine 101.

The protein belongs to the phosphohexose mutase family. Requires Mg(2+) as cofactor. Post-translationally, activated by phosphorylation.

It catalyses the reaction alpha-D-glucosamine 1-phosphate = D-glucosamine 6-phosphate. Catalyzes the conversion of glucosamine-6-phosphate to glucosamine-1-phosphate. The chain is Phosphoglucosamine mutase from Pseudomonas paraeruginosa (strain DSM 24068 / PA7) (Pseudomonas aeruginosa (strain PA7)).